A 99-amino-acid polypeptide reads, in one-letter code: Aspartyl/glutamyl-tRNA(Asn/Gln) amidotransferase subunit C (99 aa).

The protein belongs to the GatC family. Heterotrimer of A, B and C subunits.

It carries out the reaction L-glutamyl-tRNA(Gln) + L-glutamine + ATP + H2O = L-glutaminyl-tRNA(Gln) + L-glutamate + ADP + phosphate + H(+). The enzyme catalyses L-aspartyl-tRNA(Asn) + L-glutamine + ATP + H2O = L-asparaginyl-tRNA(Asn) + L-glutamate + ADP + phosphate + 2 H(+). Allows the formation of correctly charged Asn-tRNA(Asn) or Gln-tRNA(Gln) through the transamidation of misacylated Asp-tRNA(Asn) or Glu-tRNA(Gln) in organisms which lack either or both of asparaginyl-tRNA or glutaminyl-tRNA synthetases. The reaction takes place in the presence of glutamine and ATP through an activated phospho-Asp-tRNA(Asn) or phospho-Glu-tRNA(Gln). This chain is Aspartyl/glutamyl-tRNA(Asn/Gln) amidotransferase subunit C, found in Leptothrix cholodnii (strain ATCC 51168 / LMG 8142 / SP-6) (Leptothrix discophora (strain SP-6)).